The following is a 538-amino-acid chain: Chaperonin GroEL (538 aa).

ATP contacts are provided by residues 29–32 (TIGP), 86–90 (DGTTT), Gly-413, 476–478 (NAA), and Asp-492.

The protein belongs to the chaperonin (HSP60) family. As to quaternary structure, forms a cylinder of 14 subunits composed of two heptameric rings stacked back-to-back. Interacts with the co-chaperonin GroES.

It is found in the cytoplasm. It catalyses the reaction ATP + H2O + a folded polypeptide = ADP + phosphate + an unfolded polypeptide.. Functionally, together with its co-chaperonin GroES, plays an essential role in assisting protein folding. The GroEL-GroES system forms a nano-cage that allows encapsulation of the non-native substrate proteins and provides a physical environment optimized to promote and accelerate protein folding. The sequence is that of Chaperonin GroEL from Staphylococcus aureus (strain Mu3 / ATCC 700698).